The following is a 430-amino-acid chain: Serine--tRNA ligase (430 aa).

236-238 (TAE) serves as a coordination point for L-serine. 267 to 269 (RSE) is a binding site for ATP. Glu290 is a binding site for L-serine. 354 to 357 (EISS) serves as a coordination point for ATP. Ser390 lines the L-serine pocket.

It belongs to the class-II aminoacyl-tRNA synthetase family. Type-1 seryl-tRNA synthetase subfamily. Homodimer. The tRNA molecule binds across the dimer.

Its subcellular location is the cytoplasm. It catalyses the reaction tRNA(Ser) + L-serine + ATP = L-seryl-tRNA(Ser) + AMP + diphosphate + H(+). The catalysed reaction is tRNA(Sec) + L-serine + ATP = L-seryl-tRNA(Sec) + AMP + diphosphate + H(+). It functions in the pathway aminoacyl-tRNA biosynthesis; selenocysteinyl-tRNA(Sec) biosynthesis; L-seryl-tRNA(Sec) from L-serine and tRNA(Sec): step 1/1. Functionally, catalyzes the attachment of serine to tRNA(Ser). Is also able to aminoacylate tRNA(Sec) with serine, to form the misacylated tRNA L-seryl-tRNA(Sec), which will be further converted into selenocysteinyl-tRNA(Sec). This is Serine--tRNA ligase from Idiomarina loihiensis (strain ATCC BAA-735 / DSM 15497 / L2-TR).